The chain runs to 247 residues: Sugar fermentation stimulation protein homolog (247 aa).

Belongs to the SfsA family.

The sequence is that of Sugar fermentation stimulation protein homolog from Methylorubrum populi (strain ATCC BAA-705 / NCIMB 13946 / BJ001) (Methylobacterium populi).